A 342-amino-acid polypeptide reads, in one-letter code: L-threonine 3-dehydrogenase (342 aa).

Cys38 serves as a coordination point for Zn(2+). Active-site charge relay system residues include Thr40 and His43. The Zn(2+) site is built by His63, Glu64, Cys93, Cys96, Cys99, and Cys107. NAD(+) is bound by residues Ile175, Asp195, Arg200, 262-264 (LGI), and 286-287 (IY).

Belongs to the zinc-containing alcohol dehydrogenase family. Homotetramer. Requires Zn(2+) as cofactor.

It is found in the cytoplasm. The catalysed reaction is L-threonine + NAD(+) = (2S)-2-amino-3-oxobutanoate + NADH + H(+). Its pathway is amino-acid degradation; L-threonine degradation via oxydo-reductase pathway; glycine from L-threonine: step 1/2. Its function is as follows. Catalyzes the NAD(+)-dependent oxidation of L-threonine to 2-amino-3-ketobutyrate. The sequence is that of L-threonine 3-dehydrogenase from Burkholderia cenocepacia (strain HI2424).